The sequence spans 163 residues: MGIDPGLTRCGLSVVQAGKGRAVYPVAVGVVRTPSDMPVEQRLNKLFDAVEQWFDDYQPHVVALERVFERSNVSTVMNTAHASGVLMLAAARRGVDVHMYTPSEVKKSISGNGRADKAQMTRMITRILGLSEAPKPPDAADALALAVCHCWRAPLNHLVKGKL.

Residues D4, E65, and D138 contribute to the active site. Mg(2+)-binding residues include D4, E65, and D138.

This sequence belongs to the RuvC family. As to quaternary structure, homodimer which binds Holliday junction (HJ) DNA. The HJ becomes 2-fold symmetrical on binding to RuvC with unstacked arms; it has a different conformation from HJ DNA in complex with RuvA. In the full resolvosome a probable DNA-RuvA(4)-RuvB(12)-RuvC(2) complex forms which resolves the HJ. Mg(2+) serves as cofactor.

The protein resides in the cytoplasm. The catalysed reaction is Endonucleolytic cleavage at a junction such as a reciprocal single-stranded crossover between two homologous DNA duplexes (Holliday junction).. Functionally, the RuvA-RuvB-RuvC complex processes Holliday junction (HJ) DNA during genetic recombination and DNA repair. Endonuclease that resolves HJ intermediates. Cleaves cruciform DNA by making single-stranded nicks across the HJ at symmetrical positions within the homologous arms, yielding a 5'-phosphate and a 3'-hydroxyl group; requires a central core of homology in the junction. The consensus cleavage sequence is 5'-(A/T)TT(C/G)-3'. Cleavage occurs on the 3'-side of the TT dinucleotide at the point of strand exchange. HJ branch migration catalyzed by RuvA-RuvB allows RuvC to scan DNA until it finds its consensus sequence, where it cleaves and resolves the cruciform DNA. This is Crossover junction endodeoxyribonuclease RuvC from Corynebacterium jeikeium (strain K411).